A 319-amino-acid chain; its full sequence is D-alanine--D-alanine ligase B (319 aa).

The 196-residue stretch at 117–312 (KRVWLSLGLP…FQQLVLAILA (196 aa)) folds into the ATP-grasp domain. An ATP-binding site is contributed by 143 to 198 (AQRLGFPLIVKPAHEGSSIGMAKVGGLDELIAAWREAARYDSQVLVEQWISGPEFT). D266, E279, and N281 together coordinate Mg(2+).

It belongs to the D-alanine--D-alanine ligase family. Mg(2+) is required as a cofactor. Mn(2+) serves as cofactor.

The protein resides in the cytoplasm. The enzyme catalyses 2 D-alanine + ATP = D-alanyl-D-alanine + ADP + phosphate + H(+). Its pathway is cell wall biogenesis; peptidoglycan biosynthesis. Functionally, cell wall formation. This is D-alanine--D-alanine ligase B from Pseudomonas aeruginosa (strain ATCC 15692 / DSM 22644 / CIP 104116 / JCM 14847 / LMG 12228 / 1C / PRS 101 / PAO1).